The primary structure comprises 183 residues: Outer membrane protein H.8 (183 aa).

The first 17 residues, 1 to 17 (MKAYLALISAAVIGLAA), serve as a signal peptide directing secretion. Cys18 is lipidated: N-palmitoyl cysteine. A lipid anchor (S-diacylglycerol cysteine) is attached at Cys18. The disordered stretch occupies residues 27-51 (AEATPAAEAPASEAPAAEAAPADAA). The Plastocyanin-like domain maps to 57–183 (GNCAATVESN…LMNGKVTLVD (127 aa)). Cu cation-binding residues include His102, Cys166, His171, and Met175.

Requires Cu cation as cofactor.

It is found in the cell outer membrane. The protein is Outer membrane protein H.8 of Neisseria meningitidis serogroup B (strain ATCC BAA-335 / MC58).